Here is a 318-residue protein sequence, read N- to C-terminus: NADH-ubiquinone oxidoreductase chain 1 (318 aa).

Transmembrane regions (helical) follow at residues 2 to 22 (FMIN…FLTL), 76 to 96 (TLAL…YPLI), 102 to 122 (LLFI…SGWA), 146 to 166 (LAII…STLI), 171 to 191 (YLWL…STLA), 217 to 237 (AGPF…MNAL), 253 to 273 (ETYT…FLWV), and 294 to 314 (LPLT…ASCI).

It belongs to the complex I subunit 1 family. Core subunit of respiratory chain NADH dehydrogenase (Complex I) which is composed of 45 different subunits.

It localises to the mitochondrion inner membrane. The catalysed reaction is a ubiquinone + NADH + 5 H(+)(in) = a ubiquinol + NAD(+) + 4 H(+)(out). Functionally, core subunit of the mitochondrial membrane respiratory chain NADH dehydrogenase (Complex I) which catalyzes electron transfer from NADH through the respiratory chain, using ubiquinone as an electron acceptor. Essential for the catalytic activity and assembly of complex I. In Lemur catta (Ring-tailed lemur), this protein is NADH-ubiquinone oxidoreductase chain 1 (MT-ND1).